The following is a 492-amino-acid chain: Auxin transporter-like protein 1 (492 aa).

Over 1–67 (MVPREQAEEA…DAWFSCASNQ (67 aa)) the chain is Cytoplasmic. The helical transmembrane segment at 68–85 (VAQVLLTLPYSFSQLGML) threads the bilayer. The Extracellular segment spans residues 86-87 (SG). The helical transmembrane segment at 88–108 (VLLQLFYGFMGSWTAYLISVL) threads the bilayer. The Cytoplasmic portion of the chain corresponds to 109–143 (YVEYRSRKEKEGVSFKNHVIQWFEVLDGLLGPYWK). The helical transmembrane segment at 144–164 (AAGLAFNCTFLLFGSVIQLIA) threads the bilayer. The Extracellular portion of the chain corresponds to 165-180 (CASNIYYINDRLDKRT). Residues 181–201 (WTYIFGACCATTVFIPSFHNY) form a helical membrane-spanning segment. Position 202 (Arg202) is a topological domain, cytoplasmic. A helical membrane pass occupies residues 203–223 (IWSFLGLGMTTYTAWYLAIAA). Residues 224–240 (LLNGQAEGITHTGPTKL) are Extracellular-facing. The helical transmembrane segment at 241-261 (VLYFTGATNILYTFGGHAVTV) threads the bilayer. The Cytoplasmic portion of the chain corresponds to 262–274 (EIMHAMWKPAKFK). A helical transmembrane segment spans residues 275–295 (YIYLLATLYVFTLTLPSASAM). The Extracellular segment spans residues 296 to 322 (YWAFGDELLTHSNAFSLLPKTGWRDAA). Residues 323 to 343 (VILMLIHQFITFGFACTPLYF) traverse the membrane as a helical segment. At 344-364 (VWEKVIGMHDTKSICLRALAR) the chain is on the cytoplasmic side. The chain crosses the membrane as a helical span at residues 365 to 385 (LPIVVPIWFLAIIFPFFGPIN). A topological domain (extracellular) is located at residue Ser386. The helical transmembrane segment at 387 to 407 (AVGALLVSFTVYIIPALAHIL) threads the bilayer. Over 408 to 432 (TYRTASARMNAAEKPPFFLPSWTGM) the chain is Cytoplasmic. Residues 433-453 (FVLNMFIVVWVLVVGFGLGGW) traverse the membrane as a helical segment. Topologically, residues 454–492 (ASMVNFIRQIDTFGLFAKCYQCPKPAPALAQSPVPLPHH) are extracellular.

The protein belongs to the amino acid/polyamine transporter 2 family. Amino acid/auxin permease (AAAP) (TC 2.A.18.1) subfamily.

It is found in the cell membrane. Functionally, carrier protein involved in proton-driven auxin influx. May mediate the formation of auxin gradient from developing leaves (site of auxin biosynthesis) to tips. The sequence is that of Auxin transporter-like protein 1 from Oryza sativa subsp. japonica (Rice).